The following is a 217-amino-acid chain: Adapter protein MecA (217 aa).

The protein belongs to the MecA family. As to quaternary structure, homodimer.

Functionally, enables the recognition and targeting of unfolded and aggregated proteins to the ClpC protease or to other proteins involved in proteolysis. The protein is Adapter protein MecA of Listeria innocua serovar 6a (strain ATCC BAA-680 / CLIP 11262).